We begin with the raw amino-acid sequence, 253 residues long: Uridylate kinase (253 aa).

9-12 (KLSG) is a binding site for ATP. Gly-51 lines the UMP pocket. Residues Gly-52 and Arg-56 each coordinate ATP. UMP contacts are provided by residues Asp-72 and 133–140 (SGNPFFTT). Residues Thr-160, Tyr-166, and Asp-169 each contribute to the ATP site.

It belongs to the UMP kinase family. In terms of assembly, homohexamer.

The protein localises to the cytoplasm. The enzyme catalyses UMP + ATP = UDP + ADP. It participates in pyrimidine metabolism; CTP biosynthesis via de novo pathway; UDP from UMP (UMPK route): step 1/1. With respect to regulation, inhibited by UTP. Catalyzes the reversible phosphorylation of UMP to UDP. In Synechococcus sp. (strain JA-2-3B'a(2-13)) (Cyanobacteria bacterium Yellowstone B-Prime), this protein is Uridylate kinase.